The chain runs to 392 residues: L-rhamnonate dehydratase (392 aa).

Residues His22 and Arg48 each coordinate substrate. Residues Asp214, Glu240, and Glu268 each contribute to the Mg(2+) site. Residue His318 is the Proton acceptor of the active site. Glu338 lines the substrate pocket.

This sequence belongs to the mandelate racemase/muconate lactonizing enzyme family. RhamD subfamily. As to quaternary structure, homooctamer; tetramer of dimers. Mg(2+) is required as a cofactor.

It catalyses the reaction L-rhamnonate = 2-dehydro-3-deoxy-L-rhamnonate + H2O. Catalyzes the dehydration of L-rhamnonate to 2-keto-3-deoxy-L-rhamnonate (KDR). The polypeptide is L-rhamnonate dehydratase (Paraburkholderia xenovorans (strain LB400)).